The chain runs to 201 residues: MBF complex negative regulatory component yox1 (201 aa).

Positions 1–22 are enriched in polar residues; the sequence is MSLSDSPSKSGNTGKDLISNNE. The disordered stretch occupies residues 1–42; it reads MSLSDSPSKSGNTGKDLISNNEAKNHEDEETHQKKRRRRTTD. A compositionally biased stretch (basic and acidic residues) spans 23-32; the sequence is AKNHEDEETH. Positions 33 to 92 form a DNA-binding region, homeobox; it reads QKKRRRRTTDAEATLLEQYFLKTPKPSLIERQELSKKLKSSMTPRELQIWFQNKRQSLRR.

In terms of assembly, component of the MBF transcription factor complex. Post-translationally, phosphorylated in response to hydroxyurea. Phosphorylation inhibits the repressor activity and is dependent on rad3. However, the regulation of yox1 by rad3 is probably indirect.

The protein localises to the nucleus. Negative regulatory component of the MBF transcription factor complex involved in cell-cycle G1/S phase-specific gene expression and more particularly DNA replication checkpoint-dependent gene expression. The protein is MBF complex negative regulatory component yox1 (yox1) of Schizosaccharomyces pombe (strain 972 / ATCC 24843) (Fission yeast).